A 490-amino-acid polypeptide reads, in one-letter code: UDP-glycosyltransferase 84A1 (490 aa).

The active-site Proton acceptor is H30. H30 lines the an anthocyanidin pocket. Positions 358, 373, 376, 377, 378, and 381 each coordinate UDP-alpha-D-glucose. G396 lines the an anthocyanidin pocket. D397 and Q398 together coordinate UDP-alpha-D-glucose.

Belongs to the UDP-glycosyltransferase family. As to expression, expressed in roots, flowers and siliques.

The catalysed reaction is (E)-4-coumarate + UDP-alpha-D-glucose = 4-O-(beta-D-glucosyl)-trans-4-coumarate + UDP + H(+). The enzyme catalyses (E)-ferulate + UDP-alpha-D-glucose = 1-O-[(E)-feruloyl]-beta-D-glucose + UDP. It catalyses the reaction (E)-caffeate + UDP-alpha-D-glucose = 1-O-[(E)-caffeoyl]-beta-D-glucose + UDP. It carries out the reaction (E)-sinapate + UDP-alpha-D-glucose = 1-O-(trans-sinapoyl)-beta-D-glucose + UDP. The catalysed reaction is (E)-cinnamate + UDP-alpha-D-glucose = 1-O-(trans-cinnamoyl)-beta-D-glucose + UDP. In terms of biological role, UDP-glucosyltransferase that forms glucose esters with phenylpropanoids. Glucosylates 4-coumarate, ferulate, caffeate, sinapate and cinnamate. Can glucosylate the phytotoxic xenobiotic compound 2,4,5-trichlorophenol (TCP). In Arabidopsis thaliana (Mouse-ear cress), this protein is UDP-glycosyltransferase 84A1.